A 454-amino-acid chain; its full sequence is MFKMKNITLALLMSGALVGCANIGDSYQASLEDYKQYEEITKQYNVKENWWSLYDDAQLNRVVGQALINNKDLAKAAVAVNRALYSANLVGANLVPAFNGSTSSAAQRRVDISTNSAISHKGSLNVSYTLDLWQRLANTVDAAEWSHKATAEDMESARLSLINSVVTTYYQIAYLNDAISTTNETIKYYTDIGNIMQTRLVQGVADAASVDQAQQAILTARNNKLNFETQRKTAEQTLRNLLNLKPNEALNITFPHIMNVKTAGVNLNVPVSVIANRPDVKAAQFRLSSAFKNAKATQKSWFPEVNLGASLSSTASTVGTALHNPVAAGTVGISLPFLNWNTVKWNVKISEADYETARLNYEQRITTALNNVDTNYFAFTQAQSTLSNLQQTHSYNQRITQYYRNRYNAGVSELREWLVAANTEKSSQLAILNAKYQVLQSENAVYSSMAGYYL.

This sequence belongs to the outer membrane factor (OMF) (TC 1.B.17) family.

This is an uncharacterized protein from Haemophilus influenzae (strain ATCC 51907 / DSM 11121 / KW20 / Rd).